The following is an 85-amino-acid chain: High affinity immunoglobulin epsilon receptor subunit gamma (85 aa).

A signal peptide spans 1–18 (MIPAVVLLLLLLVEQAAA). At 19 to 23 (LGEPQ) the chain is on the extracellular side. A helical membrane pass occupies residues 24–44 (LCYILDAILFLYGIVLTLLYC). Over 45–85 (RLKLQVRKAATASEKSDGIYTGLSTRTQETYETLKHEKPPQ) the chain is Cytoplasmic. The ITAM domain occupies 53-81 (AATASEKSDGIYTGLSTRTQETYETLKHE). Y64 is subject to Phosphotyrosine. S68 carries the phosphoserine modification. Position 75 is a phosphotyrosine (Y75). T77 carries the phosphothreonine modification.

This sequence belongs to the CD3Z/FCER1G family. In terms of assembly, igE Fc receptor is a tetramer of an alpha chain, a beta chain, and two disulfide linked gamma chains. Associates with FCGR1A; forms a functional signaling complex. The signaling subunit of immunoglobulin gamma (IgG) Fc receptor complex. As a homodimer or a heterodimer of CD247 and FCER1G, associates with the ligand binding subunit FCGR3A to form a functional receptor complex. Associates with CLEC6A. Interacts with CLEC4E. Interacts (via ITAM domain) with SYK (via SH2 domains); activates SYK, enabling integrin-mediated activation of neutrophils and macrophages. Interacts with CSF2RB and recruits SYK in response to IL3 stimulation; this interaction is direct. Interacts with CD300LH; the interaction may be indirect. Interacts with CD300LD. Interacts with TARM1.

Its subcellular location is the cell membrane. In terms of biological role, adapter protein containing an immunoreceptor tyrosine-based activation motif (ITAM) that transduces activation signals from various immunoreceptors. As a component of the high-affinity immunoglobulin E (IgE) receptor, mediates allergic inflammatory signaling in mast cells. As a constitutive component of interleukin-3 receptor complex, selectively mediates interleukin 4/IL4 production by basophils priming T-cells toward effector T-helper 2 subset. Associates with pattern recognition receptors CLEC4D and CLEC4E to form a functional signaling complex in myeloid cells. Binding of mycobacterial trehalose 6,6'-dimycolate (TDM) to this receptor complex leads to phosphorylation of ITAM, triggering activation of SYK, CARD9 and NF-kappa-B, consequently driving maturation of antigen-presenting cells and shaping antigen-specific priming of T-cells toward effector T-helper 1 and T-helper 17 cell subtypes. May function cooperatively with other activating receptors. Functionally linked to integrin beta-2/ITGB2-mediated neutrophil activation. Also involved in integrin alpha-2/ITGA2-mediated platelet activation. This is High affinity immunoglobulin epsilon receptor subunit gamma (FCER1G) from Bos taurus (Bovine).